Here is a 364-residue protein sequence, read N- to C-terminus: DNA polymerase IV (364 aa).

Residues 14–198 form the UmuC domain; that stretch reads IIHIDMDAFF…LPIEKFHGVG (185 aa). 2 residues coordinate Mg(2+): Asp-18 and Asp-116. Glu-117 is a catalytic residue.

It belongs to the DNA polymerase type-Y family. As to quaternary structure, monomer. Mg(2+) serves as cofactor.

The protein resides in the cytoplasm. The catalysed reaction is DNA(n) + a 2'-deoxyribonucleoside 5'-triphosphate = DNA(n+1) + diphosphate. In terms of biological role, poorly processive, error-prone DNA polymerase involved in untargeted mutagenesis. Copies undamaged DNA at stalled replication forks, which arise in vivo from mismatched or misaligned primer ends. These misaligned primers can be extended by PolIV. Exhibits no 3'-5' exonuclease (proofreading) activity. May be involved in translesional synthesis, in conjunction with the beta clamp from PolIII. This is DNA polymerase IV from Streptococcus pyogenes serotype M18 (strain MGAS8232).